Consider the following 424-residue polypeptide: CinA-like protein (424 aa).

Belongs to the CinA family.

The polypeptide is CinA-like protein (Shewanella loihica (strain ATCC BAA-1088 / PV-4)).